Reading from the N-terminus, the 452-residue chain is mRNA export factor ICP27 homolog (452 aa).

Residues 42 to 164 (EAIGSTPGED…RNDQTHDESY (123 aa)) are disordered. Residues 98 to 107 (SNHHGGRDVE) are compositionally biased toward basic and acidic residues. The segment covering 129-144 (SRKHRDRSLSNRRRRP) has biased composition (basic residues). The span at 154–164 (ERNDQTHDESY) shows a compositional bias: basic and acidic residues. The Zn(2+) site is built by C335, H417, C421, and C426. The segment at 335–426 (CLLLNRDNDL…HQRECGRVEC (92 aa)) adopts a CHC2-type zinc-finger fold.

Belongs to the HHV-1 ICP27 protein family. Homodimer. Homodimerization is required for transactivation. Associates in a complex with RNA, and host export factors NXF1/TAP and ALYREF; these interactions allow nuclear export of viral transcripts. Interacts with three host shuttling SR proteins SRSF1, SRSF3 and SRSF7. Interacts with host SRPK1. Interacts with IE62; this interaction enhances IE62 transactivation. In terms of processing, phosphorylated in vitro by SRPK1.

The protein localises to the host cytoplasm. It is found in the host nucleus. Functionally, multifunctional regulator of the expression of viral genes that mediates nuclear export of viral intronless mRNAs. This immediate early (EI) protein promotes the nuclear export of viral intronless mRNAs by interacting with mRNAs and host NXF1/TAP. This Varicella-zoster virus (strain Dumas) (HHV-3) protein is mRNA export factor ICP27 homolog.